The sequence spans 671 residues: Preterminal protein (671 aa).

Residues 380–389 carry the Nuclear localization signal motif; that stretch reads RLPVRRRRRR. A disordered region spans residues 386-411; that stretch reads RRRRVPPPPPPPEEEEGEALMEEEIE. Acidic residues predominate over residues 397 to 411; it reads PEEEEGEALMEEEIE. Serine 580 carries the O-(5'-phospho-DNA)-serine modification. The interval 645 to 671 is disordered; that stretch reads GADVPLPPLPAGPEPPLPPGARPRHRF. Residues 649-665 show a composition bias toward pro residues; it reads PLPPLPAGPEPPLPPGA.

This sequence belongs to the adenoviridae terminal protein family. In terms of assembly, heterodimer with the polymerase; this heterodimer binds to bp 9 to 18 of the genome. Interacts with host POU2F1; POU2F1 binds to the auxiliary sequences in the inverted terminal repeats and tethers the pTP-POL heterodimer to the origin DNA thereby participating in the assembly of the pre-initiation complex (POL-TP-DBP-NFIA-POU2F1). Preterminal protein is used to replicate viral genome, upon genomic encapsidation it is processed first into iTP and finally into TP by adenovirus protease.

It is found in the host nucleus matrix. Functionally, protein covalently bound to the viral DNA that acts as a primer for viral genomic replication by DNA strand displacement. Assembles on the viral origin of replication in an initiation complex with viral polymerase, DBP, host NFIA and host POU2F1/OCT1. During initiation, the polymerase covalently couples the first dCTP with Ser-580 of pTP. The terminal protein stimulates the template activity over 20 fold compared to protein-free templates. Neo-synthesized viral genomes are linked to two preterminal proteins, one for each 5' end. These new genomes are encapsidated in the nucleus, and during capsid maturation by viral protease, preterminal protein is first cleaved into intermediary (iTP), then into mature TP. May play a role in host nuclear matrix localization of genomic DNA. This is Preterminal protein from Human adenovirus C serotype 5 (HAdV-5).